Reading from the N-terminus, the 473-residue chain is 3-isopropylmalate dehydratase large subunit (473 aa).

Positions 353, 414, and 417 each coordinate [4Fe-4S] cluster.

This sequence belongs to the aconitase/IPM isomerase family. LeuC type 1 subfamily. As to quaternary structure, heterodimer of LeuC and LeuD. It depends on [4Fe-4S] cluster as a cofactor.

It catalyses the reaction (2R,3S)-3-isopropylmalate = (2S)-2-isopropylmalate. Its pathway is amino-acid biosynthesis; L-leucine biosynthesis; L-leucine from 3-methyl-2-oxobutanoate: step 2/4. Its function is as follows. Catalyzes the isomerization between 2-isopropylmalate and 3-isopropylmalate, via the formation of 2-isopropylmaleate. This chain is 3-isopropylmalate dehydratase large subunit, found in Cellvibrio japonicus (strain Ueda107) (Pseudomonas fluorescens subsp. cellulosa).